We begin with the raw amino-acid sequence, 219 residues long: Carboxypeptidase Y inhibitor (219 aa).

Position 1 is an N-acetylmethionine (Met-1).

This sequence belongs to the phosphatidylethanolamine-binding protein family. As to quaternary structure, monomer.

The protein resides in the cytoplasm. In terms of biological role, specific and potent inhibitor of carboxypeptidase Y. This is Carboxypeptidase Y inhibitor (TFS1) from Saccharomyces cerevisiae (strain ATCC 204508 / S288c) (Baker's yeast).